Consider the following 369-residue polypeptide: MSSALLLAPGDLIEKAKRELEQRSITPLLREKGSTEAKSKLKEDGEKKNKSEKEENKIHDDRRVESQKSEGGGPADCQRGAGSRGANCATSTGGGDGSAGARTGIGGGGVGRVDSRSGGRGGQGAASDGKGVGKSKTGADRVANDDATRNVGSSEVSPGGITSGGLQGRGGLVAKSGECGGESLDRIGGCSGNSKTEGEEAKAGGGDRRIGGLATQEIADFVKKKIGVEVQVFSKGMSNLFTVDKSLLKRGGLGREDILHQSDIVKEIRASDKKVKIIPLSTVKRMIAEFGGTEEDEIKAVQTQSSSIRYISNRMEDVSRAKAMFTAPTGDEGWKEVAKAATQRPNIMAYVHEGEGDGLKELLHLIDHI.

2 disordered regions span residues 17-169 (KREL…LQGR) and 184-208 (LDRI…GGDR). The segment covering 29 to 68 (LREKGSTEAKSKLKEDGEKKNKSEKEENKIHDDRRVESQK) has biased composition (basic and acidic residues). A compositionally biased stretch (gly residues) spans 92–111 (TGGGDGSAGARTGIGGGGVG). Composition is skewed to basic and acidic residues over residues 137–148 (TGADRVANDDAT) and 196–208 (TEGE…GGDR).

It belongs to the orbivirus VP6 family.

Its subcellular location is the virion. In African horse sickness virus (AHSV), this protein is Protein VP6 (Segment-9).